We begin with the raw amino-acid sequence, 372 residues long: N-methyl-L-tryptophan oxidase (372 aa).

Asp-4–His-34 is an FAD binding site. Residue Cys-308 is modified to S-8alpha-FAD cysteine.

The protein belongs to the MSOX/MTOX family. MTOX subfamily. In terms of assembly, monomer. Requires FAD as cofactor.

The catalysed reaction is N(alpha)-methyl-L-tryptophan + O2 + H2O = L-tryptophan + formaldehyde + H2O2. Functionally, catalyzes the oxidative demethylation of N-methyl-L-tryptophan. In Shigella flexneri serotype 5b (strain 8401), this protein is N-methyl-L-tryptophan oxidase.